We begin with the raw amino-acid sequence, 939 residues long: Phosphoenolpyruvate carboxylase (939 aa).

Active-site residues include histidine 151 and lysine 593.

Belongs to the PEPCase type 1 family. It depends on Mg(2+) as a cofactor.

It catalyses the reaction oxaloacetate + phosphate = phosphoenolpyruvate + hydrogencarbonate. Its function is as follows. Forms oxaloacetate, a four-carbon dicarboxylic acid source for the tricarboxylic acid cycle. The sequence is that of Phosphoenolpyruvate carboxylase from Gloeobacter violaceus (strain ATCC 29082 / PCC 7421).